A 293-amino-acid polypeptide reads, in one-letter code: Protease HtpX (293 aa).

The next 2 helical transmembrane spans lie at 4 to 24 and 33 to 53; these read ISLF…VLSL and AGLM…SLLM. A Zn(2+)-binding site is contributed by His-139. Glu-140 is an active-site residue. His-143 is a binding site for Zn(2+). Helical transmembrane passes span 158–178 and 193–213; these read VVNT…AGFM and LVYF…ASII. Glu-222 is a Zn(2+) binding site.

The protein belongs to the peptidase M48B family. It depends on Zn(2+) as a cofactor.

It is found in the cell inner membrane. This is Protease HtpX from Sodalis glossinidius (strain morsitans).